We begin with the raw amino-acid sequence, 280 residues long: Pupal cuticle protein 36a (280 aa).

A signal peptide spans 1–15 (MKLFVLAAVLGVCLA). Residues 135–198 (AEGFAYDFET…SQGAHLPTPP (64 aa)) form the Chitin-binding type R&amp;R domain. The disordered stretch occupies residues 258–280 (GAGRAGGTATSASEAPTTTIRLM).

In Manduca sexta (Tobacco hawkmoth), this protein is Pupal cuticle protein 36a (PCP36a).